The chain runs to 123 residues: Small ribosomal subunit protein uS12 (123 aa).

At Asp89 the chain carries 3-methylthioaspartic acid. The tract at residues Leu102–Lys123 is disordered. Residues Gly113–Lys123 are compositionally biased toward basic residues.

It belongs to the universal ribosomal protein uS12 family. In terms of assembly, part of the 30S ribosomal subunit. Contacts proteins S8 and S17. May interact with IF1 in the 30S initiation complex.

With S4 and S5 plays an important role in translational accuracy. Its function is as follows. Interacts with and stabilizes bases of the 16S rRNA that are involved in tRNA selection in the A site and with the mRNA backbone. Located at the interface of the 30S and 50S subunits, it traverses the body of the 30S subunit contacting proteins on the other side and probably holding the rRNA structure together. The combined cluster of proteins S8, S12 and S17 appears to hold together the shoulder and platform of the 30S subunit. This Magnetococcus marinus (strain ATCC BAA-1437 / JCM 17883 / MC-1) protein is Small ribosomal subunit protein uS12.